Reading from the N-terminus, the 1104-residue chain is General transcription factor II-I repeat domain-containing protein 1 (1104 aa).

Residues Lys-27, Lys-184, Lys-212, Lys-225, Lys-238, Lys-271, Lys-337, Lys-436, Lys-439, and Lys-443 each participate in a glycyl lysine isopeptide (Lys-Gly) (interchain with G-Cter in SUMO2) cross-link. A GTF2I-like 1 repeat occupies 119–213; it reads LEQCSDVYLL…PDDGGQDTKA (95 aa). One copy of the GTF2I-like 2 repeat lies at 342 to 436; sequence IKEMEDINTL…FDERIFTGNK (95 aa). Residue Ser-448 is modified to Phosphoserine. The disordered stretch occupies residues 509–559; the sequence is SDPSPTSEEMTDSLPGHLPSEDSGYGMEMPADKGPSEEPWSEERPAEESPG. A compositionally biased stretch (basic and acidic residues) spans 538 to 555; that stretch reads PADKGPSEEPWSEERPAE. One copy of the GTF2I-like 3 repeat lies at 556 to 650; it reads ESPGDVIRPL…ELLTDGVKEP (95 aa). Residues Lys-567, Lys-579, Lys-588, Lys-622, Lys-638, Lys-669, Lys-709, Lys-717, Lys-757, Lys-759, and Lys-772 each participate in a glycyl lysine isopeptide (Lys-Gly) (interchain with G-Cter in SUMO2) cross-link. One copy of the GTF2I-like 4 repeat lies at 681-775; sequence LSRIDIANTL…FQGLIPKPET (95 aa). A disordered region spans residues 783–802; it reads EAGKTTRPRRLQQDTWQPDE. The stretch at 805-899 is one GTF2I-like 5 repeat; sequence ANRLGEKVIL…LQPFAEVCND (95 aa). Glycyl lysine isopeptide (Lys-Gly) (interchain with G-Cter in SUMO2) cross-links involve residues Lys-841 and Lys-901. The GTF2I-like 6 repeat unit spans residues 908 to 1002; that stretch reads SNKLGKKVIL…LQPFGDVCNN (95 aa). Disordered stretches follow at residues 1001-1044 and 1058-1104; these read NNAK…VAST and LHPN…LPTR. The Nuclear localization signal motif lies at 1012-1019; sequence PKRKRKRV. Low complexity predominate over residues 1021–1043; it reads EGNSVSSSSSSSSSSSNPESVAS.

Belongs to the TFII-I family. As to quaternary structure, interacts with the retinoblastoma protein (RB1) via its C-terminus. In terms of tissue distribution, widely expressed.

The protein resides in the nucleus. Functionally, may be a transcription regulator involved in cell-cycle progression and skeletal muscle differentiation. May repress GTF2I transcriptional functions, by preventing its nuclear residency, or by inhibiting its transcriptional activation. May contribute to slow-twitch fiber type specificity during myogenesis and in regenerating muscles. Binds troponin I slow-muscle fiber enhancer (USE B1). Binds specifically and with high affinity to the EFG sequences derived from the early enhancer of HOXC8. This is General transcription factor II-I repeat domain-containing protein 1 (Gtf2ird1) from Mus musculus (Mouse).